Consider the following 435-residue polypeptide: Histidinol dehydrogenase (435 aa).

Tyr-131, Gln-189, and Asn-212 together coordinate NAD(+). Residues Ser-238, Gln-260, and His-263 each contribute to the substrate site. Residues Gln-260 and His-263 each coordinate Zn(2+). Active-site proton acceptor residues include Glu-327 and His-328. His-328, Asp-361, Glu-415, and His-420 together coordinate substrate. Asp-361 provides a ligand contact to Zn(2+). His-420 contributes to the Zn(2+) binding site.

The protein belongs to the histidinol dehydrogenase family. In terms of assembly, homodimer. Zn(2+) serves as cofactor.

It catalyses the reaction L-histidinol + 2 NAD(+) + H2O = L-histidine + 2 NADH + 3 H(+). Its pathway is amino-acid biosynthesis; L-histidine biosynthesis; L-histidine from 5-phospho-alpha-D-ribose 1-diphosphate: step 9/9. Catalyzes the sequential NAD-dependent oxidations of L-histidinol to L-histidinaldehyde and then to L-histidine. The sequence is that of Histidinol dehydrogenase (hisD) from Buchnera aphidicola subsp. Acyrthosiphon pisum (strain APS) (Acyrthosiphon pisum symbiotic bacterium).